Consider the following 217-residue polypeptide: Large ribosomal subunit protein bL25 (217 aa).

Residues 178–217 are disordered; it reads VVAPTEEPTEEEIEAMEGEQQTEEPEVVGESKEDEEKTEE. The span at 184–205 shows a compositional bias: acidic residues; the sequence is EPTEEEIEAMEGEQQTEEPEVV. Basic and acidic residues predominate over residues 206–217; sequence GESKEDEEKTEE.

This sequence belongs to the bacterial ribosomal protein bL25 family. CTC subfamily. Part of the 50S ribosomal subunit; part of the 5S rRNA/L5/L18/L25 subcomplex. Contacts the 5S rRNA. Binds to the 5S rRNA independently of L5 and L18.

This is one of the proteins that binds to the 5S RNA in the ribosome where it forms part of the central protuberance. The protein is Large ribosomal subunit protein bL25 of Staphylococcus aureus (strain USA300).